Here is a 418-residue protein sequence, read N- to C-terminus: Serine hydroxymethyltransferase (418 aa).

(6S)-5,6,7,8-tetrahydrofolate-binding positions include leucine 121 and 125-127 (GHL). An N6-(pyridoxal phosphate)lysine modification is found at lysine 230. 356–358 (SPF) contributes to the (6S)-5,6,7,8-tetrahydrofolate binding site.

This sequence belongs to the SHMT family. Homodimer. It depends on pyridoxal 5'-phosphate as a cofactor.

The protein localises to the cytoplasm. The enzyme catalyses (6R)-5,10-methylene-5,6,7,8-tetrahydrofolate + glycine + H2O = (6S)-5,6,7,8-tetrahydrofolate + L-serine. The protein operates within one-carbon metabolism; tetrahydrofolate interconversion. Its pathway is amino-acid biosynthesis; glycine biosynthesis; glycine from L-serine: step 1/1. Functionally, catalyzes the reversible interconversion of serine and glycine with tetrahydrofolate (THF) serving as the one-carbon carrier. This reaction serves as the major source of one-carbon groups required for the biosynthesis of purines, thymidylate, methionine, and other important biomolecules. Also exhibits THF-independent aldolase activity toward beta-hydroxyamino acids, producing glycine and aldehydes, via a retro-aldol mechanism. This Alteromonas mediterranea (strain DSM 17117 / CIP 110805 / LMG 28347 / Deep ecotype) protein is Serine hydroxymethyltransferase.